A 280-amino-acid polypeptide reads, in one-letter code: Transcription factor MYB60 (280 aa).

HTH myb-type domains follow at residues Lys9–Ile65 and Lys66–Leu116. 2 consecutive DNA-binding regions (H-T-H motif) follow at residues Trp37–Leu61 and Trp89–Leu112. Cys49 and Cys53 each carry S-nitrosocysteine. The segment covering Lys118–Ser127 has biased composition (basic and acidic residues). 2 disordered regions span residues Lys118 to Ser149 and Glu204 to Pro247. Over residues Glu128–Ser149 the composition is skewed to polar residues.

In terms of tissue distribution, specifically expressed in guard cells. Present in seedlings, leaves, stems and flowers.

It localises to the nucleus. In terms of biological role, transcription factor involved in the regulation of gene (e.g. drought-regulated and flavonoid biosynthetic genes) expression and stomatal movements leading to negative regulation of responses to drought and responses to other physiological stimuli (e.g. light). Promotes guard cell deflation in response to water deficit. Triggers root growth upon osmotic stress (e.g. mannitol containing medium). The polypeptide is Transcription factor MYB60 (Arabidopsis thaliana (Mouse-ear cress)).